The sequence spans 811 residues: Leucine--tRNA ligase (811 aa).

The 'HIGH' region signature appears at 38 to 49 (SYPSGSNLHAGH). The 'KMSKS' region motif lies at 570–574 (KMSKS). Lysine 573 is an ATP binding site.

The protein belongs to the class-I aminoacyl-tRNA synthetase family.

It localises to the cytoplasm. It catalyses the reaction tRNA(Leu) + L-leucine + ATP = L-leucyl-tRNA(Leu) + AMP + diphosphate. The chain is Leucine--tRNA ligase from Clostridium kluyveri (strain ATCC 8527 / DSM 555 / NBRC 12016 / NCIMB 10680 / K1).